The primary structure comprises 326 residues: Isopenicillin N synthase (326 aa).

Isopenicillin N-binding residues include Arg-84, Tyr-88, and Tyr-186. N-[(5S)-5-amino-5-carboxypentanoyl]-L-cysteinyl-D-valine contacts are provided by Arg-84, Tyr-88, Tyr-186, His-209, and Asp-211. One can recognise a Fe2OG dioxygenase domain in the interval 183-283 (LIRYPFLENY…RLSIPFFANL (101 aa)). His-209, Asp-211, and His-265 together coordinate Fe(2+). Arg-274 is a 2-oxoglutarate binding site. Isopenicillin N is bound at residue Ser-276. An N-[(5S)-5-amino-5-carboxypentanoyl]-L-cysteinyl-D-valine-binding site is contributed by Ser-276.

The protein belongs to the iron/ascorbate-dependent oxidoreductase family. Fe cation serves as cofactor. Requires L-ascorbate as cofactor.

The enzyme catalyses N-[(5S)-5-amino-5-carboxypentanoyl]-L-cysteinyl-D-valine + O2 = isopenicillin N + 2 H2O. It participates in antibiotic biosynthesis; penicillin G biosynthesis; penicillin G from L-alpha-aminoadipate and L-cysteine and L-valine: step 2/3. Removes, in the presence of oxygen, 4 hydrogen atoms from delta-L-(alpha-aminoadipyl)-L-cysteinyl-D-valine (ACV) to form the azetidinone and thiazolidine rings of isopenicillin. The polypeptide is Isopenicillin N synthase (pcbC) (Lysobacter lactamgenus).